A 183-amino-acid polypeptide reads, in one-letter code: Peptide deformylase (183 aa).

C110 and H153 together coordinate Fe cation. E154 is an active-site residue. H157 contacts Fe cation.

The protein belongs to the polypeptide deformylase family. The cofactor is Fe(2+).

It carries out the reaction N-terminal N-formyl-L-methionyl-[peptide] + H2O = N-terminal L-methionyl-[peptide] + formate. Functionally, removes the formyl group from the N-terminal Met of newly synthesized proteins. Requires at least a dipeptide for an efficient rate of reaction. N-terminal L-methionine is a prerequisite for activity but the enzyme has broad specificity at other positions. This Listeria monocytogenes serotype 4a (strain HCC23) protein is Peptide deformylase.